The chain runs to 312 residues: MLQYQIDRIEHQITDDRSQTGVFLIGPLERGQATTLGNSLRRMLMGNLAGTAVTAVRIAGVNHEYATIPGVREDVLDILLNCKQLTVTSRTDELEIGRLIVSGPAVVKAKDLQFSSQVQVVDGERPIATVSEGHSLELEVHVERGVGYRPVDRHNEDTSAIDLLQIDAVFMPVHRVNFTTDETAVAEGGSARERLRMEVVTDGSMTPDDAIAQAANQLIELFQPLATVTMVEEPGIEPEPSAEAQIPLEELNLSVRAYNCLKRAQVNSVSDLMGFSYEDLLEIKNFGSKSADEVIEALERIGISIPQSRTSV.

Residues M1–T229 form an alpha N-terminal domain (alpha-NTD) region. An alpha C-terminal domain (alpha-CTD) region spans residues I236–V312.

This sequence belongs to the RNA polymerase alpha chain family. In cyanobacteria the RNAP catalytic core is composed of 2 alpha, 1 beta, 1 beta', 1 gamma and 1 omega subunit. When a sigma factor is associated with the core the holoenzyme is formed, which can initiate transcription.

The enzyme catalyses RNA(n) + a ribonucleoside 5'-triphosphate = RNA(n+1) + diphosphate. In terms of biological role, DNA-dependent RNA polymerase catalyzes the transcription of DNA into RNA using the four ribonucleoside triphosphates as substrates. This chain is DNA-directed RNA polymerase subunit alpha, found in Synechococcus sp. (strain CC9311).